A 323-amino-acid polypeptide reads, in one-letter code: Transaldolase (323 aa).

Lys133 serves as the catalytic Schiff-base intermediate with substrate.

It belongs to the transaldolase family. Type 1 subfamily. In terms of assembly, monomer.

It catalyses the reaction D-sedoheptulose 7-phosphate + D-glyceraldehyde 3-phosphate = D-erythrose 4-phosphate + beta-D-fructose 6-phosphate. The protein operates within carbohydrate degradation; pentose phosphate pathway; D-glyceraldehyde 3-phosphate and beta-D-fructose 6-phosphate from D-ribose 5-phosphate and D-xylulose 5-phosphate (non-oxidative stage): step 2/3. Transaldolase important for the balance of metabolites in the pentose-phosphate pathway. Involved in xylose fermentation to ethanol. The chain is Transaldolase from Fusarium oxysporum f. sp. lycopersici (strain 4287 / CBS 123668 / FGSC 9935 / NRRL 34936) (Fusarium vascular wilt of tomato).